A 73-amino-acid polypeptide reads, in one-letter code: Toxin Td3 (73 aa).

The first 7 residues, 1-7, serve as a signal peptide directing secretion; that stretch reads IGMVVEC. The region spanning 8–70 is the LCN-type CS-alpha/beta domain; sequence KDGYLMGPDG…VWERATNRCG (63 aa). 4 cysteine pairs are disulfide-bonded: Cys18–Cys69, Cys22–Cys44, Cys30–Cys50, and Cys34–Cys52. Lys71 carries the lysine amide modification.

Belongs to the long (4 C-C) scorpion toxin superfamily. Sodium channel inhibitor family. Beta subfamily. Expressed by the venom gland.

It localises to the secreted. In terms of biological role, beta toxins bind voltage-independently at site-4 of sodium channels (Nav) and shift the voltage of activation toward more negative potentials thereby affecting sodium channel activation and promoting spontaneous and repetitive firing. The polypeptide is Toxin Td3 (Tityus discrepans (Venezuelan scorpion)).